We begin with the raw amino-acid sequence, 423 residues long: Putative transmembrane protein ORF103 (423 aa).

The span at 43–57 (EPKIEQEEPQQKPEV) shows a compositional bias: basic and acidic residues. A disordered region spans residues 43–91 (EPKIEQEEPQQKPEVVDVYSNETDKNEEEVSIITSEDEEEDEKGMLFKR). The segment covering 67–84 (KNEEEVSIITSEDEEEDE) has biased composition (acidic residues). Helical transmembrane passes span 125-145 (IIGI…VAVL) and 162-182 (FSLC…GLAI). The segment at 253-282 (DESGSEVSSEDEESDQETLLRNRKMPTNSK) is disordered. 2 helical membrane-spanning segments follow: residues 326–346 (LISA…IVGS) and 366–386 (IPTL…MCVL).

It localises to the host membrane. This Magallana gigas (Pacific oyster) protein is Putative transmembrane protein ORF103.